We begin with the raw amino-acid sequence, 411 residues long: Squalene synthase (411 aa).

A run of 2 helical transmembrane segments spans residues Ser281–Tyr301 and Ser388–Gly408.

The protein belongs to the phytoene/squalene synthase family. Mg(2+) is required as a cofactor.

Its subcellular location is the endoplasmic reticulum membrane. It catalyses the reaction 2 (2E,6E)-farnesyl diphosphate + NADPH + H(+) = squalene + 2 diphosphate + NADP(+). It carries out the reaction 2 (2E,6E)-farnesyl diphosphate + NADH + H(+) = squalene + 2 diphosphate + NAD(+). It participates in terpene metabolism; lanosterol biosynthesis; lanosterol from farnesyl diphosphate: step 1/3. The polypeptide is Squalene synthase (Nicotiana benthamiana).